The following is a 122-amino-acid chain: MTKLSRKLQTQKRHRRLRRSVIGDATRPRLSVFRSNNHIYAQVIDDSAQKTICSASTVDKELREKSDKLPSDCNSSSIVGKLLANRAIKKGIKQVIFDRGGNLYHGRVKALADAAREAGLEF.

Residues 1–19 (MTKLSRKLQTQKRHRRLRR) are compositionally biased toward basic residues. Residues 1–21 (MTKLSRKLQTQKRHRRLRRSV) form a disordered region.

The protein belongs to the universal ribosomal protein uL18 family. In terms of assembly, part of the 50S ribosomal subunit; part of the 5S rRNA/L5/L18/L25 subcomplex. Contacts the 5S and 23S rRNAs.

In terms of biological role, this is one of the proteins that bind and probably mediate the attachment of the 5S RNA into the large ribosomal subunit, where it forms part of the central protuberance. This chain is Large ribosomal subunit protein uL18, found in Prochlorococcus marinus (strain MIT 9312).